Consider the following 114-residue polypeptide: Thioredoxin H1 (114 aa).

Position 2 is an N-acetylalanine (Ala-2). The 113-residue stretch at 2-114 (ASEEGQVIAC…LQSTIAKHLA (113 aa)) folds into the Thioredoxin domain. Residues Cys-40 and Cys-43 each act as nucleophile in the active site. Cysteines 40 and 43 form a disulfide.

The protein belongs to the thioredoxin family. Plant H-type subfamily. In terms of assembly, interacts with FBA6. Interacts with MDH1.

Its subcellular location is the cytoplasm. Its function is as follows. Thiol-disulfide oxidoreductase involved in the redox regulation of a number of cytosolic enzymes. Activates the cytosolic malate dehydrogenase (MDH) probably by reducing an interchain disulfide bond of the inactive MDH homodimer. Possesses insulin disulfide bonds reducing activity. In Arabidopsis thaliana (Mouse-ear cress), this protein is Thioredoxin H1 (TRX1).